The primary structure comprises 767 residues: Two-component response regulator-like PRR73 (767 aa).

A disordered region spans residues 1-64 (MGSACEAGTD…EPQQTDEQKE (64 aa)). The 119-residue stretch at 82-200 (RVLLVENDDS…ELKNLWQHVW (119 aa)) folds into the Response regulatory domain. Low complexity predominate over residues 205–214 (SSSGSGSESG). Disordered stretches follow at residues 205 to 272 (SSSG…QSSW), 312 to 388 (RWLP…NEPT), 476 to 546 (ASNQ…RGKV), 646 to 701 (ANYS…SGSG), and 727 to 767 (NFGK…DEDR). The span at 238–252 (DNEDDDDNDEDDDDL) shows a compositional bias: acidic residues. Polar residues-rich tracts occupy residues 263 to 272 (DNGSGTQSSW), 343 to 361 (RNSS…VNPT), and 488 to 497 (CSPQDNSSEA). Positions 518 to 531 (GSNGSSNNNDMGSS) are enriched in low complexity. Over residues 532 to 543 (TKNAITKPSSNR) the composition is skewed to polar residues. Over residues 689–700 (GAGGGNGSGSGS) the composition is skewed to gly residues. In terms of domain architecture, CCT spans 712-754 (REAALNKFRQKRKVRNFGKKVRYQSRKRLAEQRPRIRGQFVRQ). A compositionally biased stretch (basic residues) spans 727–738 (NFGKKVRYQSRK).

It belongs to the ARR-like family.

It localises to the nucleus. Controls photoperiodic flowering response. Seems to be one of the component of the circadian clock. Expression of several members of the ARR-like family is controlled by circadian rhythm. The particular coordinated sequential expression of PRR73, PRR37, PRR95, PRR59 and PPR1 result to circadian waves that may be at the basis of the endogenous circadian clock. This is Two-component response regulator-like PRR73 (PRR73) from Oryza sativa subsp. japonica (Rice).